The primary structure comprises 985 residues: Bifunctional glutamine synthetase adenylyltransferase/adenylyl-removing enzyme (985 aa).

The tract at residues 1–472 is adenylyl removase; sequence MTSSAPGNAD…HYARLFEGDP (472 aa). Residues 477 to 985 form an adenylyl transferase region; sequence SLPPVNYGAG…RRVFTSLLEE (509 aa).

This sequence belongs to the GlnE family. Mg(2+) is required as a cofactor.

It catalyses the reaction [glutamine synthetase]-O(4)-(5'-adenylyl)-L-tyrosine + phosphate = [glutamine synthetase]-L-tyrosine + ADP. The enzyme catalyses [glutamine synthetase]-L-tyrosine + ATP = [glutamine synthetase]-O(4)-(5'-adenylyl)-L-tyrosine + diphosphate. In terms of biological role, involved in the regulation of glutamine synthetase GlnA, a key enzyme in the process to assimilate ammonia. When cellular nitrogen levels are high, the C-terminal adenylyl transferase (AT) inactivates GlnA by covalent transfer of an adenylyl group from ATP to specific tyrosine residue of GlnA, thus reducing its activity. Conversely, when nitrogen levels are low, the N-terminal adenylyl removase (AR) activates GlnA by removing the adenylyl group by phosphorolysis, increasing its activity. The regulatory region of GlnE binds the signal transduction protein PII (GlnB) which indicates the nitrogen status of the cell. This chain is Bifunctional glutamine synthetase adenylyltransferase/adenylyl-removing enzyme, found in Bradyrhizobium sp. (strain BTAi1 / ATCC BAA-1182).